We begin with the raw amino-acid sequence, 336 residues long: Eukaryotic translation initiation factor 3 subunit H (336 aa).

One can recognise an MPN domain in the interval 21-154 (VQCDGLAAMK…LKAYRLTPQA (134 aa)).

It belongs to the eIF-3 subunit H family. As to quaternary structure, component of the eukaryotic translation initiation factor 3 (eIF-3) complex.

Its subcellular location is the cytoplasm. Functionally, component of the eukaryotic translation initiation factor 3 (eIF-3) complex, which is involved in protein synthesis of a specialized repertoire of mRNAs and, together with other initiation factors, stimulates binding of mRNA and methionyl-tRNAi to the 40S ribosome. The eIF-3 complex specifically targets and initiates translation of a subset of mRNAs involved in cell proliferation. This is Eukaryotic translation initiation factor 3 subunit H from Aedes aegypti (Yellowfever mosquito).